Reading from the N-terminus, the 265-residue chain is RWD domain-containing protein 3 (265 aa).

The region spanning 7–114 (EEVAALSAIY…WTQQNLNNLI (108 aa)) is the RWD domain.

Its subcellular location is the nucleus. The protein resides in the cytoplasm. Its function is as follows. Enhancer of SUMO conjugation. Increases SUMO conjugation to proteins by promoting the: binding of E1 and E2 enzymes, thioester linkage between SUMO and ube2i/ubc9 and transfer of SUMO to specific target proteins which include hif1a, pias, nfkbia, nr3c1 and top1. Has no effect on ubiquitination. The chain is RWD domain-containing protein 3 (rwdd3) from Xenopus tropicalis (Western clawed frog).